The sequence spans 302 residues: Dermonecrotic toxin LiSicTox-alphaIA2bii (302 aa).

The first 14 residues, 1-14 (IALILVCWSVLSQA), serve as a signal peptide directing secretion. The propeptide occupies 15-22 (AQTDVEGR). His-34 is a catalytic residue. Mg(2+) is bound by residues Glu-54 and Asp-56. His-70 (nucleophile) is an active-site residue. Disulfide bonds link Cys-74-Cys-80 and Cys-76-Cys-219. Position 114 (Asp-114) interacts with Mg(2+). N-linked (GlcNAc...) asparagine glycosylation is present at Asn-279.

Belongs to the arthropod phospholipase D family. Class II subfamily. The cofactor is Mg(2+). In terms of tissue distribution, expressed by the venom gland.

Its subcellular location is the secreted. It carries out the reaction an N-(acyl)-sphingosylphosphocholine = an N-(acyl)-sphingosyl-1,3-cyclic phosphate + choline. The catalysed reaction is an N-(acyl)-sphingosylphosphoethanolamine = an N-(acyl)-sphingosyl-1,3-cyclic phosphate + ethanolamine. It catalyses the reaction a 1-acyl-sn-glycero-3-phosphocholine = a 1-acyl-sn-glycero-2,3-cyclic phosphate + choline. The enzyme catalyses a 1-acyl-sn-glycero-3-phosphoethanolamine = a 1-acyl-sn-glycero-2,3-cyclic phosphate + ethanolamine. In terms of biological role, dermonecrotic toxins cleave the phosphodiester linkage between the phosphate and headgroup of certain phospholipids (sphingolipid and lysolipid substrates), forming an alcohol (often choline) and a cyclic phosphate. This toxin acts on sphingomyelin (SM). It may also act on ceramide phosphoethanolamine (CPE), lysophosphatidylcholine (LPC) and lysophosphatidylethanolamine (LPE), but not on lysophosphatidylserine (LPS), and lysophosphatidylglycerol (LPG). It acts by transphosphatidylation, releasing exclusively cyclic phosphate products as second products. Induces dermonecrosis, hemolysis, increased vascular permeability, edema, inflammatory response, and platelet aggregation. In Loxosceles intermedia (Brown spider), this protein is Dermonecrotic toxin LiSicTox-alphaIA2bii.